A 485-amino-acid polypeptide reads, in one-letter code: Glutamyl-tRNA(Gln) amidotransferase subunit A (485 aa).

Active-site charge relay system residues include Lys-80 and Ser-155. The active-site Acyl-ester intermediate is Ser-179.

It belongs to the amidase family. GatA subfamily. In terms of assembly, heterotrimer of A, B and C subunits.

It carries out the reaction L-glutamyl-tRNA(Gln) + L-glutamine + ATP + H2O = L-glutaminyl-tRNA(Gln) + L-glutamate + ADP + phosphate + H(+). In terms of biological role, allows the formation of correctly charged Gln-tRNA(Gln) through the transamidation of misacylated Glu-tRNA(Gln) in organisms which lack glutaminyl-tRNA synthetase. The reaction takes place in the presence of glutamine and ATP through an activated gamma-phospho-Glu-tRNA(Gln). This is Glutamyl-tRNA(Gln) amidotransferase subunit A from Endomicrobium trichonymphae.